A 689-amino-acid polypeptide reads, in one-letter code: Methionine--tRNA ligase (689 aa).

Positions 19–29 (PYPTGDLHIGH) match the 'HIGH' region motif. Cys150, Cys153, Cys162, and Cys166 together coordinate Zn(2+). The short motif at 338–342 (GLSTS) is the 'KMSKS' region element. Position 341 (Thr341) interacts with ATP. Residues 591–689 (EFQALDLRVG…EDSEPGTKVM (99 aa)) form the tRNA-binding domain.

The protein belongs to the class-I aminoacyl-tRNA synthetase family. MetG type 1 subfamily. In terms of assembly, homodimer. It depends on Zn(2+) as a cofactor.

The protein localises to the cytoplasm. The catalysed reaction is tRNA(Met) + L-methionine + ATP = L-methionyl-tRNA(Met) + AMP + diphosphate. Is required not only for elongation of protein synthesis but also for the initiation of all mRNA translation through initiator tRNA(fMet) aminoacylation. The protein is Methionine--tRNA ligase of Halobacterium salinarum (strain ATCC 700922 / JCM 11081 / NRC-1) (Halobacterium halobium).